The following is a 408-amino-acid chain: Secreted effector protein SseJ (408 aa).

The active-site Nucleophile is serine 151. Residues aspartate 381 and histidine 384 contribute to the active site.

The protein belongs to the 'GDSL' lipolytic enzyme family. As to quaternary structure, interacts with RhoA and indirectly with SifA.

It localises to the secreted. Its subcellular location is the host cytoplasm. Its function is as follows. Effector proteins function to alter host cell physiology and promote bacterial survival in host tissues. This protein is required for endosomal tubulation and negatively regulates the formation of Salmonella-induced filaments (Sifs) in epithelial cells. Has both deacylase and esterification activities in vitro, but esterification is probably the dominant activity in host cells. Significantly contributes to cholesterol esterification, which reduces cellular cholesterol in cells and abrogates the ability of SifA to associate with cholesterol and LAMP-1 vesicles. This Salmonella typhimurium (strain LT2 / SGSC1412 / ATCC 700720) protein is Secreted effector protein SseJ (sseJ).